The primary structure comprises 323 residues: tRNA N6-adenosine threonylcarbamoyltransferase (323 aa).

The Fe cation site is built by histidine 106, histidine 110, and tyrosine 127. Residues 127–131, aspartate 159, glycine 172, glutamate 176, and asparagine 255 each bind substrate; that span reads YVSGA. Residue aspartate 283 participates in Fe cation binding.

It belongs to the KAE1 / TsaD family. In terms of assembly, monomer. Component of the KEOPS complex that consists of Kae1, Bud32, Cgi121 and Pcc1; the whole complex dimerizes. It depends on Fe(2+) as a cofactor.

It is found in the cytoplasm. It catalyses the reaction L-threonylcarbamoyladenylate + adenosine(37) in tRNA = N(6)-L-threonylcarbamoyladenosine(37) in tRNA + AMP + H(+). Functionally, required for the formation of a threonylcarbamoyl group on adenosine at position 37 (t(6)A37) in tRNAs that read codons beginning with adenine. Is a component of the KEOPS complex that is probably involved in the transfer of the threonylcarbamoyl moiety of threonylcarbamoyl-AMP (TC-AMP) to the N6 group of A37. Kae1 likely plays a direct catalytic role in this reaction, but requires other protein(s) of the complex to fulfill this activity. The protein is tRNA N6-adenosine threonylcarbamoyltransferase of Methanocella arvoryzae (strain DSM 22066 / NBRC 105507 / MRE50).